Here is a 395-residue protein sequence, read N- to C-terminus: Elongation factor Tu (395 aa).

Residues 10–205 (KPHVNVGTIG…VDNDIPIPPR (196 aa)) form the tr-type G domain. Residues 19-26 (GHVDHGKT) form a G1 region. 19 to 26 (GHVDHGKT) serves as a coordination point for GTP. Thr-26 is a binding site for Mg(2+). Residues 60–64 (GITIN) form a G2 region. Residues 81 to 84 (DCPG) are G3. Residues 81-85 (DCPGH) and 136-139 (NKVD) each bind GTP. A G4 region spans residues 136–139 (NKVD). Residues 174 to 176 (SAL) are G5.

This sequence belongs to the TRAFAC class translation factor GTPase superfamily. Classic translation factor GTPase family. EF-Tu/EF-1A subfamily. As to quaternary structure, monomer.

Its subcellular location is the cytoplasm. It catalyses the reaction GTP + H2O = GDP + phosphate + H(+). In terms of biological role, GTP hydrolase that promotes the GTP-dependent binding of aminoacyl-tRNA to the A-site of ribosomes during protein biosynthesis. The polypeptide is Elongation factor Tu (Cytophaga hutchinsonii (strain ATCC 33406 / DSM 1761 / CIP 103989 / NBRC 15051 / NCIMB 9469 / D465)).